The following is a 714-amino-acid chain: VIN3-like protein 2 (714 aa).

The PHD-type zinc-finger motif lies at 164–232 (RCSCCICRKY…CFYCVSCGKA (69 aa)). A Nuclear localization signal motif is present at residues 239–246 (WKKQLTIA). A Fibronectin type-III domain is found at 366–463 (GSTKIRFEDV…INVLTRSAEE (98 aa)). The span at 478 to 498 (LTNCSTLSSNPSSVEAESNND) shows a compositional bias: polar residues. Residues 478 to 530 (LTNCSTLSSNPSSVEAESNNDYIVPKKPSSKNEDNNSPSVDESAAKRMKRTTD) are disordered. The interval 602 to 714 (SMKDNCNNGD…PSGFCMKLWH (113 aa)) is VIN3-Interacting Domain (VID).

In terms of assembly, self-interacts. Interacts with VIN3 and VIL1. Component of the plant homeodomain / polycomb repressive complex 2 (PHD-PRC2) large complex during prolonged cold, composed of core PRC2 components (VRN2, EZA1, FIE and MSI1), and three related PHD finger proteins (VIL1, VIL2 and VIN3) that mediates histone H3 trimethylation on 'Lys-27' (H3K27me3).

Its subcellular location is the nucleus. Maybe involved in both the vernalization and photoperiod pathways by regulating gene expression. Binds preferentially to dimethylated histone H3 'Lys-9' (H3K9me2). Promotes flowering in non-inductive photoperiods (e.g. short days) through the maintenance of the epigenetically repressed state of MAF5 via H3K9me2 and plant homeodomain / polycomb repressive complex 2 (PHD-PRC2)-dependent H3K27me3. The sequence is that of VIN3-like protein 2 (VIL2) from Arabidopsis thaliana (Mouse-ear cress).